A 171-amino-acid polypeptide reads, in one-letter code: Ribosome maturation factor RimM (171 aa).

Residues 98–170 form the PRC barrel domain; the sequence is EGEFYLHQII…AVQVSVPEGL (73 aa).

It belongs to the RimM family. In terms of assembly, binds ribosomal protein uS19.

It localises to the cytoplasm. In terms of biological role, an accessory protein needed during the final step in the assembly of 30S ribosomal subunit, possibly for assembly of the head region. Essential for efficient processing of 16S rRNA. May be needed both before and after RbfA during the maturation of 16S rRNA. It has affinity for free ribosomal 30S subunits but not for 70S ribosomes. This chain is Ribosome maturation factor RimM, found in Pediococcus pentosaceus (strain ATCC 25745 / CCUG 21536 / LMG 10740 / 183-1w).